The sequence spans 343 residues: F17b-G fimbrial adhesin (343 aa).

The N-terminal stretch at 1-22 is a signal peptide; that stretch reads MTNFYKVFLAVFILVCCNISHA. Residues 23–199 are receptor-binding lectin domain; it reads VVSFIGSTEN…LNPFTLNDTV (177 aa). Residues 65 to 66, 110 to 111, and 138 to 141 contribute to the a carbohydrate site; these read AN, DT, and STQG. Cys-75 and Cys-132 are disulfide-bonded. Residues 200-343 are fimbrillin-binding domain; the sequence is TSCRLLTPSA…GISTFTFSYQ (144 aa). The segment at 287 to 307 is disordered; it reads LKFGPDSPVKGNENQWQLSTG. Over residues 298 to 307 the composition is skewed to polar residues; sequence NENQWQLSTG.

This sequence belongs to the fimbrial protein family.

Its subcellular location is the fimbrium. Functionally, essential fimbrial adhesion factor that mediates binding to N-acetylglucosamine-containing receptors in the host intestinal microvilli, leading to colonization of the intestinal tissue, and diarrhea or septicemia. Also confers adhesiveness to laminin and basement membranes. The polypeptide is F17b-G fimbrial adhesin (f17bG) (Escherichia coli).